We begin with the raw amino-acid sequence, 184 residues long: uncharacterized protein (184 aa).

Residues 146–177 (HPKTSLAQQPNAKATQPPLSKETLNTAKETDP) form a disordered region. Residues 150–172 (SLAQQPNAKATQPPLSKETLNTA) are compositionally biased toward polar residues.

This is an uncharacterized protein from Picosynechococcus sp. (strain ATCC 27264 / PCC 7002 / PR-6) (Agmenellum quadruplicatum).